Reading from the N-terminus, the 777-residue chain is MLSASRTALRAPRSVRGLATASLTKDSQVNQNLLESHSFINYKKHLENVEIVKSRLNRPLTYAEKLLYGHLDDPHNQEIERGVSYLKLRPDRVACQDATAQMAILQFMSAGIPQVATPSTVHCDHLIQAQVGGPKDLARAIDLNKEVYDFLSTACAKYNLGFWKPGSGIIHQIVLENYAFPGALLIGTDSHTPNAGGLGQLAIGVGGADAVDVMSGLPWELKAPKIIGVKLTGKMSGWTSPKDIILKLAGITTVKGGTGSIVEYFGSGVDTFSCTGMGTICNMGAEIGATTSVFPFNDSMVDYLNATGRSEIAQFAQVYKKDFLSADEGAEYDQVIEIDLNTLEPHINGPFTPDLATPVSKMKETAIANGWPLEVKVGLIGSCTNSSYEDMTRAASIIKDAGAHGLKSKALYTVSPGSEQVRATIARDGQLKTFEDFGGVVMANACGPCIGQWDRQDIKKGDKNTIVSSFNRNFTARNDGNPATHAFVASPEMATVYAISGDLGFNPITDTLVGADGKEFKLKEPQGVGLPPDGYDPGENTYQAPPEDRASVEVVISPTSDRLQKLSPFKPWDGKDAERLPILIKAVGKTTTDHISMAGPWLKYRGHLENISNNYMIGAINAENGKANEVRNHYTGKYDGVPQTAAAYRDAGHKWVVIGDENFGEGSSREHAALEPRFLGGFAIITKSFARIHETNLKKQGLLPLNFKNPADYDKINFDDEVDLIGLTTLAPGKDVILRVHPKEGEAWEAVLTHTFNSEQLEWFKHGSALNFIKSKY.

Substrate is bound by residues glutamine 96 and 189-191 (DSH). 3 residues coordinate [4Fe-4S] cluster: cysteine 383, cysteine 446, and cysteine 449. Substrate-binding positions include arginine 472, arginine 477, arginine 605, and 668-669 (SR).

It belongs to the aconitase/IPM isomerase family. In terms of assembly, monomer. [4Fe-4S] cluster is required as a cofactor.

The protein resides in the mitochondrion. The catalysed reaction is citrate = D-threo-isocitrate. It participates in carbohydrate metabolism; tricarboxylic acid cycle; isocitrate from oxaloacetate: step 2/2. In terms of biological role, catalyzes the isomerization of citrate to isocitrate via cis-aconitate, a step in the citric acid cycle. This chain is Aconitate hydratase, mitochondrial (ACO1), found in Candida albicans (strain SC5314 / ATCC MYA-2876) (Yeast).